The sequence spans 296 residues: MAVLAPLIALVYSVPRLSRWLAQPYYLLSALLSAAFLLVRKLPPLCHGLPTQREDGNPCDFDWREVEILMFLSAIVMMKNRRSITVEQHIGNIFMFSKVANAILFFRLDIRMGLLYITLCIVFLMTCEPPLYMGPEYIKYFNDKTIDEELERDKKVTWIVEFFANWSNDCQSFAPIYADLSLKYNCTGLNFGKVDVGRYTDVSMRYKVSTSPLTKQLPTLILFQGGKEVMRRPQIDKKGRAVSWTFSEENVIREFNLNELYQRAKKPSKAGDSIPEEQPVASAPTTVSDGENKKDK.

Residues 1 to 48 (MAVLAPLIALVYSVPRLSRWLAQPYYLLSALLSAAFLLVRKLPPLCHG) form the signal peptide. Topologically, residues 49 to 102 (LPTQREDGNPCDFDWREVEILMFLSAIVMMKNRRSITVEQHIGNIFMFSKVANA) are extracellular. A helical membrane pass occupies residues 103–125 (ILFFRLDIRMGLLYITLCIVFLM). Residues 114-270 (LLYITLCIVF…YQRAKKPSKA (157 aa)) form the Thioredoxin domain. Over 126–296 (TCEPPLYMGP…VSDGENKKDK (171 aa)) the chain is Cytoplasmic. Serine 211, serine 243, and serine 288 each carry phosphoserine. The disordered stretch occupies residues 266–296 (KPSKAGDSIPEEQPVASAPTTVSDGENKKDK). Residues 293–296 (KKDK) carry the Di-lysine motif motif.

Monomer. Homodimer; disulfide-linked. Occurs in both reduced and oxidized monomeric form. Oxidative conditions increase homodimerization. Interacts with CANX. Interacts with ATP2A2.

It localises to the endoplasmic reticulum membrane. It is found in the mitochondrion membrane. Endoplasmic reticulum and mitochondria-associated protein that probably functions as a regulator of cellular redox state and thereby regulates protein post-translational modification, protein folding and mitochondrial activity. Indirectly regulates neuronal proliferation, migration, and organization in the developing brain. The protein is Thioredoxin-related transmembrane protein 2 (TMX2) of Pongo abelii (Sumatran orangutan).